Consider the following 96-residue polypeptide: MARTCVVTGKGTTAGNNVSHSHKKNRRIWKVNVITKKIFLEDENRWVRVKISTRALRTLRKKGLKVAIKDHGGDITAITPKKYVGITPKAQPVATA.

Belongs to the bacterial ribosomal protein bL28 family.

This chain is Large ribosomal subunit protein bL28, found in Leptospira biflexa serovar Patoc (strain Patoc 1 / Ames).